The sequence spans 409 residues: Imidazolonepropionase (409 aa).

Fe(3+) contacts are provided by His78 and His80. 2 residues coordinate Zn(2+): His78 and His80. Residues Arg87, Tyr150, and His183 each coordinate 4-imidazolone-5-propanoate. Residue Tyr150 participates in N-formimidoyl-L-glutamate binding. His248 contributes to the Fe(3+) binding site. His248 contributes to the Zn(2+) binding site. Gln251 serves as a coordination point for 4-imidazolone-5-propanoate. Residue Asp323 coordinates Fe(3+). Asp323 lines the Zn(2+) pocket. N-formimidoyl-L-glutamate is bound by residues Asn325 and Gly327. Thr328 serves as a coordination point for 4-imidazolone-5-propanoate.

It belongs to the metallo-dependent hydrolases superfamily. HutI family. The cofactor is Zn(2+). It depends on Fe(3+) as a cofactor.

It is found in the cytoplasm. It catalyses the reaction 4-imidazolone-5-propanoate + H2O = N-formimidoyl-L-glutamate. It functions in the pathway amino-acid degradation; L-histidine degradation into L-glutamate; N-formimidoyl-L-glutamate from L-histidine: step 3/3. Its function is as follows. Catalyzes the hydrolytic cleavage of the carbon-nitrogen bond in imidazolone-5-propanoate to yield N-formimidoyl-L-glutamate. It is the third step in the universal histidine degradation pathway. This Mesorhizobium japonicum (strain LMG 29417 / CECT 9101 / MAFF 303099) (Mesorhizobium loti (strain MAFF 303099)) protein is Imidazolonepropionase.